A 61-amino-acid polypeptide reads, in one-letter code: Large ribosomal subunit protein uL30 (61 aa).

It belongs to the universal ribosomal protein uL30 family. In terms of assembly, part of the 50S ribosomal subunit.

The protein is Large ribosomal subunit protein uL30 of Chlorobaculum parvum (strain DSM 263 / NCIMB 8327) (Chlorobium vibrioforme subsp. thiosulfatophilum).